Here is a 573-residue protein sequence, read N- to C-terminus: Myrcene synthase TPS5FN (573 aa).

Positions 286, 323, 327, 464, and 467 each coordinate (2E)-geranyl diphosphate. 2 residues coordinate Mg(2+): Asp323 and Asp327. Residues 323–327 carry the DDXXD motif motif; sequence DDIFD. Mg(2+)-binding residues include Asp467, Thr471, and Glu475.

The protein belongs to the terpene synthase family. Tpsb subfamily. It depends on Mg(2+) as a cofactor. Mn(2+) serves as cofactor. In terms of tissue distribution, expressed in glandular trichomes two to four weeks after flowering onset.

The catalysed reaction is (2E)-geranyl diphosphate = beta-myrcene + diphosphate. It catalyses the reaction (2E)-geranyl diphosphate = (1R,5R)-alpha-pinene + diphosphate. The enzyme catalyses (2E)-geranyl diphosphate = sabinene + diphosphate. It carries out the reaction (2E)-geranyl diphosphate = (4S)-limonene + diphosphate. The catalysed reaction is (2E)-geranyl diphosphate = terpinolene + diphosphate. It catalyses the reaction (2E)-geranyl diphosphate = camphene + diphosphate. It participates in secondary metabolite biosynthesis; terpenoid biosynthesis. Functionally, involved in monoterpene (C10) olefins biosynthesis, constituants of cannabinoids and terpenoids-rich resins. Catalyzes mainly the conversion of (2E)-geranyl diphosphate to beta-myrcene, and also produces minor products such as alpha-pinene, camphene, sabinene, limonene and terpinolene. This chain is Myrcene synthase TPS5FN, found in Cannabis sativa (Hemp).